The primary structure comprises 331 residues: Glyceraldehyde-3-phosphate dehydrogenase (331 aa).

NAD(+)-binding positions include Arg-12–Ile-13, Asp-34, Arg-78, and Thr-120. Residues Ser-149–Thr-151, Thr-180, Thr-209–Gly-210, and Arg-232 contribute to the D-glyceraldehyde 3-phosphate site. Cys-150 functions as the Nucleophile in the catalytic mechanism. Position 314 (Asn-314) interacts with NAD(+).

This sequence belongs to the glyceraldehyde-3-phosphate dehydrogenase family. As to quaternary structure, homotetramer.

It is found in the cytoplasm. It carries out the reaction D-glyceraldehyde 3-phosphate + phosphate + NAD(+) = (2R)-3-phospho-glyceroyl phosphate + NADH + H(+). It functions in the pathway carbohydrate degradation; glycolysis; pyruvate from D-glyceraldehyde 3-phosphate: step 1/5. Functionally, catalyzes the oxidative phosphorylation of glyceraldehyde 3-phosphate (G3P) to 1,3-bisphosphoglycerate (BPG) using the cofactor NAD. The first reaction step involves the formation of a hemiacetal intermediate between G3P and a cysteine residue, and this hemiacetal intermediate is then oxidized to a thioester, with concomitant reduction of NAD to NADH. The reduced NADH is then exchanged with the second NAD, and the thioester is attacked by a nucleophilic inorganic phosphate to produce BPG. The protein is Glyceraldehyde-3-phosphate dehydrogenase (gapA) of Shimwellia blattae (strain ATCC 29907 / DSM 4481 / JCM 1650 / NBRC 105725 / CDC 9005-74) (Escherichia blattae).